A 483-amino-acid chain; its full sequence is RNA-binding protein Nova-1 (483 aa).

The segment at Met1–Thr44 is disordered. The Bipartite nuclear localization signal motif lies at Lys27–Asn43. 3 KH domains span residues Gln49 to Ile116, Ile147 to Ile213, and Lys397 to Ile464. Positions Gly395–Pro479 are required for RNA binding.

In terms of assembly, interacts with PTBP2; the interaction is direct.

It localises to the nucleus. Functions to regulate alternative splicing in neurons by binding pre-mRNA in a sequence-specific manner to activate exon inclusion or exclusion. It binds specifically to the sequences 5'-YCAY-3' and regulates splicing in only a subset of regulated exons. Binding to an exonic 5'-YCAY-3' cluster changes the protein complexes assembled on pre-mRNA, blocking U1 snRNP binding and exon inclusion, whereas binding to an intronic 5'-YCAY-3' cluster enhances spliceosome assembly and exon inclusion. Binding to 5'-YCAY-3' clusters results in a local and asymmetric action to regulate spliceosome assembly and alternative splicing in neurons. Binding to an exonic 5'-YCAY-3' cluster changed the protein complexes assembled on pre-mRNA, blocking U1 snRNP (small nuclear ribonucleoprotein) binding and exon inclusion, whereas binding to an intronic 5'-YCAY-3' cluster enhanced spliceosome assembly and exon inclusion. With NOVA1, they perform unique biological functions in different brain areas and cell types. Autoregulates its own expression by acting as a splicing repressor. Acts to activate the inclusion of exon E3A in the glycine receptor alpha-2 chain and of exon E9 in gamma-aminobutyric-acid receptor gamma-2 subunit via a distal downstream UCAU-rich intronic splicing enhancer. Acts to regulate a novel glycine receptor alpha-2 chain splice variant (alpha-2N) in developing spinal cord. This Macaca fascicularis (Crab-eating macaque) protein is RNA-binding protein Nova-1 (NOVA1).